Reading from the N-terminus, the 457-residue chain is Bifunctional protein GlmU (457 aa).

The interval 1 to 228 (MEELVSVILA…SEEIIGVNSR (228 aa)) is pyrophosphorylase. UDP-N-acetyl-alpha-D-glucosamine is bound by residues 9 to 12 (LAAG), Lys23, Gln73, and 78 to 79 (GT). Asp102 is a binding site for Mg(2+). UDP-N-acetyl-alpha-D-glucosamine-binding residues include Gly139, Glu154, Asn169, and Asn226. Position 226 (Asn226) interacts with Mg(2+). A linker region spans residues 229 to 249 (VQLSNAEKVMRRRINEKHMEN). The N-acetyltransferase stretch occupies residues 250–457 (GVTIIDPDST…VEERIKKGRL (208 aa)). UDP-N-acetyl-alpha-D-glucosamine contacts are provided by Arg331 and Lys349. Catalysis depends on His361, which acts as the Proton acceptor. Residues Tyr364 and Asn375 each contribute to the UDP-N-acetyl-alpha-D-glucosamine site. Acetyl-CoA contacts are provided by residues 384-385 (NY), Ala421, and Arg438.

The protein in the N-terminal section; belongs to the N-acetylglucosamine-1-phosphate uridyltransferase family. This sequence in the C-terminal section; belongs to the transferase hexapeptide repeat family. As to quaternary structure, homotrimer. It depends on Mg(2+) as a cofactor.

It localises to the cytoplasm. The catalysed reaction is alpha-D-glucosamine 1-phosphate + acetyl-CoA = N-acetyl-alpha-D-glucosamine 1-phosphate + CoA + H(+). It catalyses the reaction N-acetyl-alpha-D-glucosamine 1-phosphate + UTP + H(+) = UDP-N-acetyl-alpha-D-glucosamine + diphosphate. It functions in the pathway nucleotide-sugar biosynthesis; UDP-N-acetyl-alpha-D-glucosamine biosynthesis; N-acetyl-alpha-D-glucosamine 1-phosphate from alpha-D-glucosamine 6-phosphate (route II): step 2/2. The protein operates within nucleotide-sugar biosynthesis; UDP-N-acetyl-alpha-D-glucosamine biosynthesis; UDP-N-acetyl-alpha-D-glucosamine from N-acetyl-alpha-D-glucosamine 1-phosphate: step 1/1. Its pathway is bacterial outer membrane biogenesis; LPS lipid A biosynthesis. Its function is as follows. Catalyzes the last two sequential reactions in the de novo biosynthetic pathway for UDP-N-acetylglucosamine (UDP-GlcNAc). The C-terminal domain catalyzes the transfer of acetyl group from acetyl coenzyme A to glucosamine-1-phosphate (GlcN-1-P) to produce N-acetylglucosamine-1-phosphate (GlcNAc-1-P), which is converted into UDP-GlcNAc by the transfer of uridine 5-monophosphate (from uridine 5-triphosphate), a reaction catalyzed by the N-terminal domain. In Caldanaerobacter subterraneus subsp. tengcongensis (strain DSM 15242 / JCM 11007 / NBRC 100824 / MB4) (Thermoanaerobacter tengcongensis), this protein is Bifunctional protein GlmU.